The chain runs to 649 residues: DNA mismatch repair protein MutL (649 aa).

This sequence belongs to the DNA mismatch repair MutL/HexB family.

This protein is involved in the repair of mismatches in DNA. It is required for dam-dependent methyl-directed DNA mismatch repair. May act as a 'molecular matchmaker', a protein that promotes the formation of a stable complex between two or more DNA-binding proteins in an ATP-dependent manner without itself being part of a final effector complex. This chain is DNA mismatch repair protein MutL, found in Streptococcus pneumoniae serotype 19F (strain G54).